The primary structure comprises 342 residues: S-adenosylmethionine:tRNA ribosyltransferase-isomerase (342 aa).

It belongs to the QueA family. In terms of assembly, monomer.

The protein resides in the cytoplasm. It catalyses the reaction 7-aminomethyl-7-carbaguanosine(34) in tRNA + S-adenosyl-L-methionine = epoxyqueuosine(34) in tRNA + adenine + L-methionine + 2 H(+). It functions in the pathway tRNA modification; tRNA-queuosine biosynthesis. Functionally, transfers and isomerizes the ribose moiety from AdoMet to the 7-aminomethyl group of 7-deazaguanine (preQ1-tRNA) to give epoxyqueuosine (oQ-tRNA). This is S-adenosylmethionine:tRNA ribosyltransferase-isomerase from Streptococcus pyogenes serotype M3 (strain ATCC BAA-595 / MGAS315).